A 186-amino-acid polypeptide reads, in one-letter code: MINRNANRDRDRSRSNDKELKINYRIKAREVRVIFENGTQEVLSIEDAIKKAKEAGLDLVEVSPNVSPPVCKIIDYGKYKFHQEKRQKEQKKNQKVIKLKEVRMQPKIDTHDLDFKSKNILSFLKDGNKVKVTIRFRGRELAHTYLGYGILNSILEKVGDVNYVLESAAKMEGKTMFLIVAPKFKK.

It belongs to the IF-3 family. In terms of assembly, monomer.

The protein resides in the cytoplasm. IF-3 binds to the 30S ribosomal subunit and shifts the equilibrium between 70S ribosomes and their 50S and 30S subunits in favor of the free subunits, thus enhancing the availability of 30S subunits on which protein synthesis initiation begins. This is Translation initiation factor IF-3 from Borreliella afzelii (strain PKo) (Borrelia afzelii).